A 435-amino-acid polypeptide reads, in one-letter code: Trigger factor (435 aa).

One can recognise a PPIase FKBP-type domain in the interval 163-248 (GDRVTIDFEG…LTRIEAQNLP (86 aa)).

Belongs to the FKBP-type PPIase family. Tig subfamily.

It localises to the cytoplasm. It carries out the reaction [protein]-peptidylproline (omega=180) = [protein]-peptidylproline (omega=0). Involved in protein export. Acts as a chaperone by maintaining the newly synthesized protein in an open conformation. Functions as a peptidyl-prolyl cis-trans isomerase. The protein is Trigger factor of Leptothrix cholodnii (strain ATCC 51168 / LMG 8142 / SP-6) (Leptothrix discophora (strain SP-6)).